The chain runs to 656 residues: MEASYESESESESEAGPGTQRPGTGTVSAAVREHLRKLCLREFPCGAGSWNKSRFLPQTWRTWRELVPREEDVVSPGEETVEALLGLVRSRHSPWALLNNSNAEDSFLRELAIRNPLTITDTFFYSYFRSLRVIDKKVTLVDKDLLKFLKLEELVLSANRIKEVDATNLPPTLKVLELYGNEISSMECLCAHPPAGLQHLGLGHNKLLGPLESLYVTANHWPNLVSLDLGFNDLTDLQSMVTSLRTLRHLRLLVLQGNPLALVPYYRGLTIDSLAQLCVLDDITVSPNEKHLFRGLSLNGDLLAQEAQFVVTIGNIRGVLDTSVLDPEPRPEGPFITYNYYVTYDFVKDEEGEMNESAGVLAEIVKPSPSLELLVEESPEEVVEDVIEDIVEEVTEEVEGSLESEVEESGESELSVISGPSTILQMPRASAEELAKLRLRIDPRLCPSPGTVLFSTAHKPWAEVIPCSYEMQHSLRDLVPLKAFLLAGTTVTIVEEKILSWPVVLPAVDSPLSAKKGKGEKDKKGKEKDRTGKGEKEPAKEWKVLKKKKEPPKELRQDPPILQVLGRGLVILEPLLAGEPLVSTVCNFGVVRTLTSDRLTLARDSKKIKKVAKKEKPKAVIPIYEGDYHPEPLTVEVQIQLNQCRSAEEALRMFAV.

Acidic residues predominate over residues 1–13; that stretch reads MEASYESESESES. The interval 1–25 is disordered; sequence MEASYESESESESEAGPGTQRPGTG. LRR repeat units follow at residues 150 to 170, 172 to 193, 196 to 215, and 223 to 244; these read KLEE…TNLP, TLKV…CAHP, GLQH…ESLY, and NLVS…VTSL. Residues 258-296 form the LRRCT domain; sequence NPLALVPYYRGLTIDSLAQLCVLDDITVSPNEKHLFRGL. Residues 512–554 are disordered; that stretch reads LSAKKGKGEKDKKGKEKDRTGKGEKEPAKEWKVLKKKKEPPKE. Residues 517-544 show a composition bias toward basic and acidic residues; it reads GKGEKDKKGKEKDRTGKGEKEPAKEWKV.

This is Leucine-rich repeat-containing protein 43 (LRRC43) from Homo sapiens (Human).